A 151-amino-acid polypeptide reads, in one-letter code: Aspartate carbamoyltransferase regulatory chain (151 aa).

Zn(2+)-binding residues include Cys-108, Cys-113, Cys-138, and Cys-141.

Belongs to the PyrI family. In terms of assembly, contains catalytic and regulatory chains. It depends on Zn(2+) as a cofactor.

Its function is as follows. Involved in allosteric regulation of aspartate carbamoyltransferase. In Pyrobaculum neutrophilum (strain DSM 2338 / JCM 9278 / NBRC 100436 / V24Sta) (Thermoproteus neutrophilus), this protein is Aspartate carbamoyltransferase regulatory chain.